The following is an 80-amino-acid chain: Myrmicitoxin(1)-Pr1a (80 aa).

Residues 1–23 form the signal peptide; that stretch reads MEIPKLLYIAVIAIGLSGSLTWA. A propeptide spanning residues 24–57 is cleaved from the precursor; the sequence is TPLANPLAEAEAEAKATAEATAEALAEALAEPEP. Position 79 is a phenylalanine amide (phenylalanine 79).

The protein belongs to the formicidae venom clade 1 family. As to expression, expressed by the venom gland.

The protein localises to the secreted. Functionally, vertebrate-selective toxin that causes pain by targeting voltage-gated sodium channels. This Pogonomyrmex rugosus (Desert harvester ant) protein is Myrmicitoxin(1)-Pr1a.